The sequence spans 113 residues: Dolichyl-diphosphooligosaccharide--protein glycosyltransferase subunit DAD1 (113 aa).

An N-acetylserine modification is found at Ser-2. At 2 to 30 (SASVVSVISRFLEEYLSSTPQRLKLLDAY) the chain is on the cytoplasmic side. Residues 31–51 (LLYILLTGALQFGYCLLVGTF) form a helical membrane-spanning segment. A topological domain (lumenal) is located at residue Pro-52. The chain crosses the membrane as a helical span at residues 53–73 (FNSFLSGFISCVGSFILAVCL). The Cytoplasmic portion of the chain corresponds to 74–92 (RIQINPQNKADFQGISPER). Residues 93–113 (AFADFLFASTILHLVVMNFVG) traverse the membrane as a helical segment.

This sequence belongs to the DAD/OST2 family. In terms of assembly, component of the oligosaccharyltransferase (OST) complex. OST exists in two different complex forms which contain common core subunits RPN1, RPN2, OST48, OST4, DAD1 and TMEM258, either STT3A or STT3B as catalytic subunits, and form-specific accessory subunits. STT3A complex assembly occurs through the formation of 3 subcomplexes. Subcomplex 1 contains RPN1 and TMEM258, subcomplex 2 contains the STT3A-specific subunits STT3A, DC2/OSTC, and KCP2 as well as the core subunit OST4, and subcomplex 3 contains RPN2, DAD1, and OST48. The STT3A complex can form stable complexes with the Sec61 complex or with both the Sec61 and TRAP complexes.

Its subcellular location is the endoplasmic reticulum membrane. Its pathway is protein modification; protein glycosylation. In terms of biological role, subunit of the oligosaccharyl transferase (OST) complex that catalyzes the initial transfer of a defined glycan (Glc(3)Man(9)GlcNAc(2) in eukaryotes) from the lipid carrier dolichol-pyrophosphate to an asparagine residue within an Asn-X-Ser/Thr consensus motif in nascent polypeptide chains, the first step in protein N-glycosylation. N-glycosylation occurs cotranslationally and the complex associates with the Sec61 complex at the channel-forming translocon complex that mediates protein translocation across the endoplasmic reticulum (ER). All subunits are required for a maximal enzyme activity. The chain is Dolichyl-diphosphooligosaccharide--protein glycosyltransferase subunit DAD1 from Mus musculus (Mouse).